The following is a 235-amino-acid chain: Purine nucleoside phosphorylase DeoD-type (235 aa).

A purine D-ribonucleoside is bound at residue H4. Phosphate contacts are provided by residues G20, R24, R43, and 87–90 (RVGT). A purine D-ribonucleoside contacts are provided by residues 179–181 (EME) and 203–204 (SD). The Proton donor role is filled by D204.

This sequence belongs to the PNP/UDP phosphorylase family. In terms of assembly, homohexamer; trimer of homodimers.

It carries out the reaction a purine D-ribonucleoside + phosphate = a purine nucleobase + alpha-D-ribose 1-phosphate. The catalysed reaction is a purine 2'-deoxy-D-ribonucleoside + phosphate = a purine nucleobase + 2-deoxy-alpha-D-ribose 1-phosphate. In terms of biological role, catalyzes the reversible phosphorolytic breakdown of the N-glycosidic bond in the beta-(deoxy)ribonucleoside molecules, with the formation of the corresponding free purine bases and pentose-1-phosphate. The protein is Purine nucleoside phosphorylase DeoD-type of Clostridium perfringens (strain ATCC 13124 / DSM 756 / JCM 1290 / NCIMB 6125 / NCTC 8237 / Type A).